A 278-amino-acid chain; its full sequence is Probable NADP-dependent mannitol dehydrogenase (278 aa).

NADP(+) contacts are provided by Ile45, Asn117, and Lys152. Active-site proton donor residues include Ser171 and Tyr186. NADP(+)-binding residues include Tyr186, Lys190, and Thr220. The active-site Lowers pKa of active site Tyr is Lys190.

The protein belongs to the short-chain dehydrogenases/reductases (SDR) family. In terms of assembly, homotetramer.

It catalyses the reaction D-mannitol + NADP(+) = D-fructose + NADPH + H(+). Its function is as follows. Versatile oxidoreductase that catalyzes the oxidation and reduction of polar as well as non-polar substrates at a very broad pH range. Preferentially oxidizes secondary alcohols. Has highest activity for racemic 2-heptanol and racemic octanol. Is also an efficient reductase for selected substrates. Substrate selectivity was found for medium chain length ketones with the carbonyl function at position C-2. Has highest activities for ribulose and fructose. The enzyme is (R)-selective in the reduction direction and produces exclusively the (R)-enantiomer. In Yarrowia lipolytica (strain CLIB 122 / E 150) (Yeast), this protein is Probable NADP-dependent mannitol dehydrogenase.